A 122-amino-acid chain; its full sequence is Large ribosomal subunit protein bL12 (122 aa).

The protein belongs to the bacterial ribosomal protein bL12 family. As to quaternary structure, homodimer. Part of the ribosomal stalk of the 50S ribosomal subunit. Forms a multimeric L10(L12)X complex, where L10 forms an elongated spine to which 2 to 4 L12 dimers bind in a sequential fashion. Binds GTP-bound translation factors.

Functionally, forms part of the ribosomal stalk which helps the ribosome interact with GTP-bound translation factors. Is thus essential for accurate translation. In Pasteurella multocida (strain Pm70), this protein is Large ribosomal subunit protein bL12.